The primary structure comprises 302 residues: Formylmethanofuran--tetrahydromethanopterin formyltransferase (302 aa).

Belongs to the FTR family. Homotetramer.

The protein localises to the cytoplasm. The catalysed reaction is N-formylmethanofuran + 5,6,7,8-tetrahydromethanopterin + H(+) = N(5)-formyl-5,6,7,8-tetrahydromethanopterin + methanofuran. Its pathway is one-carbon metabolism; formaldehyde degradation; formate from formaldehyde (H(4)MPT route): step 4/5. Its function is as follows. Catalyzes the transfer of a formyl group from 5-formyl tetrahydromethanopterin (5-formyl-H(4)MPT) to methanofuran (MFR) to produce formylmethanofuran (formyl-MFR) and tetrahydromethanopterin (H(4)MPT). This Methylobacillus flagellatus (strain ATCC 51484 / DSM 6875 / VKM B-1610 / KT) protein is Formylmethanofuran--tetrahydromethanopterin formyltransferase.